Here is a 177-residue protein sequence, read N- to C-terminus: GTP-dependent dephospho-CoA kinase (177 aa).

GTP contacts are provided by aspartate 48, valine 49, valine 50, aspartate 67, lysine 69, and glutamate 124.

This sequence belongs to the GTP-dependent DPCK family.

The enzyme catalyses 3'-dephospho-CoA + GTP = GDP + CoA + H(+). The protein operates within cofactor biosynthesis; coenzyme A biosynthesis. In terms of biological role, catalyzes the GTP-dependent phosphorylation of the 3'-hydroxyl group of dephosphocoenzyme A to form coenzyme A (CoA). This Pyrococcus furiosus (strain ATCC 43587 / DSM 3638 / JCM 8422 / Vc1) protein is GTP-dependent dephospho-CoA kinase.